The chain runs to 171 residues: Shikimate kinase (171 aa).

ATP is bound at residue 14–19; it reads GAGKST. Ser-18 is a Mg(2+) binding site. 3 residues coordinate substrate: Asp-36, Arg-60, and Gly-82. Arg-120 is an ATP binding site. A substrate-binding site is contributed by Arg-139. Gln-156 contributes to the ATP binding site.

The protein belongs to the shikimate kinase family. As to quaternary structure, monomer. Mg(2+) is required as a cofactor.

Its subcellular location is the cytoplasm. It carries out the reaction shikimate + ATP = 3-phosphoshikimate + ADP + H(+). The protein operates within metabolic intermediate biosynthesis; chorismate biosynthesis; chorismate from D-erythrose 4-phosphate and phosphoenolpyruvate: step 5/7. Catalyzes the specific phosphorylation of the 3-hydroxyl group of shikimic acid using ATP as a cosubstrate. This Shewanella woodyi (strain ATCC 51908 / MS32) protein is Shikimate kinase.